Reading from the N-terminus, the 67-residue chain is Large ribosomal subunit protein bL35 (67 aa).

It belongs to the bacterial ribosomal protein bL35 family.

This is Large ribosomal subunit protein bL35 from Brachyspira hyodysenteriae (strain ATCC 49526 / WA1).